Consider the following 1171-residue polypeptide: MASGSRATPTRSPSSARPAAPRHQHHHSQSSGGSTSRAGGGGGGGGGGGGGAAAAESVSKAVAQYTLDARLHAVFEQSGASGRSFDYTQSLRASPTPSSEQQIAAYLSRIQRGGHIQPFGCTLAVADDSSFRLLAYSENTADLLDLSPHHSVPSLDSSAVPPPVSLGADARLLFAPSSAVLLERAFAAREISLLNPLWIHSRVSSKPFYAILHRIDVGVVIDLEPARTEDPALSIAGAVQSQKLAVRAISRLQALPGGDVKLLCDTVVEHVRELTGYDRVMVYRFHEDEHGEVVAESRRNNLEPYIGLHYPATDIPQASRFLFRQNRVRMIADCHAAPVRVIQDPALTQPLCLVGSTLRSPHGCHAQYMANMGSIASLVMAVIISSGGDDDHNISRGSIPSAMKLWGLVVCHHTSPRCIPFPLRYACEFLMQAFGLQLNMELQLAHQLSEKHILRTQTLLCDMLLRDSPTGIVTQSPSIMDLVKCDGAALYYHGKYYPLGVTPTEVQIKDIIEWLTMCHGDSTGLSTDSLADAGYPGAAALGDAVSGMAVAYITPSDYLFWFRSHTAKEIKWGGAKHHPEDKDDGQRMHPRSSFKAFLEVVKSRSLPWENAEMDAIHSLQLILRDSFRDSAEGTSNSKAIVNGQVQLGELELRGIDELSSVAREMVRLIETATVPIFAVDTDGCINGWNAKVAELTGLSVEEAMGKSLVNDLIFKESEETVNKLLSRALRGDEDKNVEIKLKTFGPEQSKGPIFVIVNACSSRDYTKNIVGVCFVGQDVTGQKVVMDKFINIQGDYKAIVHNPNPLIPPIFASDENTCCSEWNTAMEKLTGWSRGEVVGKLLVGEVFGNCCRLKGPDALTKFMIVLHNAIGGQDCEKFPFSFFDKNGKYVQALLTANTRSRMDGEAIGAFCFLQIASPELQQAFEIQRHHEKKCYARMKELAYIYQEIKNPLNGIRFTNSLLEMTDLKDDQRQFLETSTACEKQMSKIVKDASLQSIEDGSLVLEKGEFSLGSVMNAVVSQVMIQLRERDLQLIRDIPDEIKEASAYGDQYRIQQVLCDFLLSMVRFAPAENGWVEIQVRPNIKQNSDGTDTMLFPFRFACPGEGLPPEIVQDMFSNSRWTTQEGIGLSICRKILKLMGGEVQYIRESERSFFHIVLELPQPQQAASRGTS.

The segment covering 1–19 has biased composition (low complexity); the sequence is MASGSRATPTRSPSSARPA. The disordered stretch occupies residues 1-53; sequence MASGSRATPTRSPSSARPAAPRHQHHHSQSSGGSTSRAGGGGGGGGGGGGGAA. Residues 38–52 are compositionally biased toward gly residues; that stretch reads AGGGGGGGGGGGGGA. Positions 259–442 constitute a GAF domain; sequence DVKLLCDTVV…AFGLQLNMEL (184 aa). Cys364 is a phytochromobilin binding site. 2 PAS domains span residues 661 to 732 and 795 to 866; these read VARE…LRGD and DYKA…MIVL. The region spanning 943 to 1161 is the Histidine kinase domain; it reads YIYQEIKNPL…FFHIVLELPQ (219 aa).

This sequence belongs to the phytochrome family. As to quaternary structure, homodimer. In terms of processing, contains one covalently linked phytochromobilin chromophore.

In terms of biological role, regulatory photoreceptor which exists in two forms that are reversibly interconvertible by light: the Pr form that absorbs maximally in the red region of the spectrum and the Pfr form that absorbs maximally in the far-red region. Photoconversion of Pr to Pfr induces an array of morphogenic responses, whereas reconversion of Pfr to Pr cancels the induction of those responses. Pfr controls the expression of a number of nuclear genes including those encoding the small subunit of ribulose-bisphosphate carboxylase, chlorophyll A/B binding protein, protochlorophyllide reductase, rRNA, etc. It also controls the expression of its own gene(s) in a negative feedback fashion. This chain is Phytochrome B (PHYB), found in Oryza sativa subsp. indica (Rice).